We begin with the raw amino-acid sequence, 344 residues long: Plastoglobule-localized metallopeptidase 48, chloroplastic (344 aa).

Residues 1–47 (MAVSVSAPVLSLCYNQSGELSRSLGYRLPKKVGFSSGRRSVSYIGFG) constitute a chloroplast transit peptide. The next 2 helical transmembrane spans lie at 102–122 (LLGS…SVLV) and 169–189 (FIVV…QAVL). A Zn(2+)-binding site is contributed by His-191. Residue Glu-192 is part of the active site. A Zn(2+)-binding site is contributed by His-195. Residues 201 to 221 (GVWLTFANILTLGAYTVPAFG) form a helical membrane-spanning segment. Glu-240 lines the Zn(2+) pocket. The chain crosses the membrane as a helical span at residues 256–272 (VVVSVLMKLAGGCPSIA).

The protein belongs to the peptidase M48 family. M48D subfamily. As to quaternary structure, interacts with plastoglobule (PG) core proteins ABC1K3, PES1 and CCD4. The cofactor is Zn(2+). In terms of tissue distribution, mostly expressed in flowers (e.g. sepals, petals and stamen), seeds, leaves and cotyledons.

It is found in the plastid. Its subcellular location is the chloroplast. The protein resides in the plastoglobule. It localises to the chloroplast membrane. Metalloendopeptidase with a Zn-dependent proteolytic activity and substrate cleavage upstream of hydrophobic residues. Positive regulator of senescence, probably by degrading CCD4, thus participating in the controlled removal of carotenoids from the thylakoid membrane during the senescence process. The protein is Plastoglobule-localized metallopeptidase 48, chloroplastic of Arabidopsis thaliana (Mouse-ear cress).